The primary structure comprises 239 residues: Adapter protein MecA (239 aa).

The span at 118-128 (EQRTKEKEAQG) shows a compositional bias: basic and acidic residues. The interval 118–137 (EQRTKEKEAQGSKRQKSSAR) is disordered.

Belongs to the MecA family. In terms of assembly, homodimer.

In terms of biological role, enables the recognition and targeting of unfolded and aggregated proteins to the ClpC protease or to other proteins involved in proteolysis. In Staphylococcus aureus (strain Mu3 / ATCC 700698), this protein is Adapter protein MecA.